Consider the following 887-residue polypeptide: Collagen alpha-2(I) chain (887 aa).

Positions 1–42 (GPMGIMGPRGPPGASGAPGPQGFQGPPGEPGEPGQTGPAGAR) are enriched in low complexity. A disordered region spans residues 1–887 (GPMGIMGPRG…PGPPGPPGPS (887 aa)). The segment covering 51 to 65 (AGEDGHPGKPGRSGE) has biased composition (basic and acidic residues). 7 stretches are compositionally biased toward low complexity: residues 126 to 155 (VGAPGPAGARGSDGSVGPVGPAGPIGSAGP), 170 to 194 (PVGSPGASGPAGPRGEVGIPGVSGP), 221 to 236 (PGPVGAAGATGARGIV), 278 to 290 (IRGSPGSRGIPGA), 368 to 388 (AGIAGARGAPGPDGNNGAQGP), 444 to 455 (PGESGAAGPTGP), and 473 to 503 (EPGVVGAPGTAGPSGPSGIPGERGAAGIPGP). Positions 504-517 (KGEKGEPGIRRDGA) are enriched in basic and acidic residues. Low complexity-rich tracts occupy residues 518–533 (RGAPGAVGAPGPAGAN), 560–580 (VGPAGPNGFAGPAGAAGQPGA), 595–605 (ATGFPGAAGRT), 658–673 (PGPQGIIGAPGFIGIP), 690–720 (EPGPIGIAGPPGARGPPGAVGNPGVNGAPGE), and 766–782 (EPGPAGVVGPTGAVGPR). The segment covering 791-802 (RGDKGEPGDKGP) has biased composition (basic and acidic residues). Pro residues predominate over residues 872 to 887 (AGPPGPPGPPGPPGPS).

The protein belongs to the fibrillar collagen family. Trimers of one alpha 2(I) and two alpha 1(I) chains. Interacts (via C-terminus) with TMEM131 (via PapD-L domain); the interaction is direct and is involved in assembly and TRAPPIII ER-to-Golgi transport complex-dependent secretion of collagen. Prolines at the third position of the tripeptide repeating unit (G-X-Y) are hydroxylated in some or all of the chains. In terms of tissue distribution, forms the fibrils of tendon, ligaments and bones. In bones, the fibrils are mineralized with calcium hydroxyapatite.

It localises to the secreted. The protein localises to the extracellular space. Its subcellular location is the extracellular matrix. Its function is as follows. Type I collagen is a member of group I collagen (fibrillar forming collagen). The sequence is that of Collagen alpha-2(I) chain from Hippopotamus amphibius (Hippopotamus).